A 192-amino-acid polypeptide reads, in one-letter code: Fe/S biogenesis protein NfuA (192 aa).

[4Fe-4S] cluster is bound by residues cysteine 149 and cysteine 152.

It belongs to the NfuA family. In terms of assembly, homodimer. It depends on [4Fe-4S] cluster as a cofactor.

Its function is as follows. Involved in iron-sulfur cluster biogenesis. Binds a 4Fe-4S cluster, can transfer this cluster to apoproteins, and thereby intervenes in the maturation of Fe/S proteins. Could also act as a scaffold/chaperone for damaged Fe/S proteins. This is Fe/S biogenesis protein NfuA from Proteus mirabilis (strain HI4320).